A 113-amino-acid chain; its full sequence is uncharacterized protein (113 aa).

A signal peptide spans Met1–Ala38.

This is an uncharacterized protein from Haemophilus influenzae (strain ATCC 51907 / DSM 11121 / KW20 / Rd).